Here is a 29-residue protein sequence, read N- to C-terminus: Toxin II.9 (29 aa).

In terms of domain architecture, LCN-type CS-alpha/beta spans 2 to 29; sequence KDGYLVNKYTGCKVNCYKLGENKFCNRE.

This sequence belongs to the long (4 C-C) scorpion toxin superfamily. Sodium channel inhibitor family. Beta subfamily. In terms of tissue distribution, expressed by the venom gland.

The protein resides in the secreted. Binds to sodium channels (Nav) and shift the voltage of activation toward more negative potentials. This toxin is active on crustaceans. The chain is Toxin II.9 from Centruroides limpidus (Mexican scorpion).